Consider the following 585-residue polypeptide: Eukaryotic translation initiation factor 3 subunit D (585 aa).

Gly residues predominate over residues 110-130; sequence GGGTVFRGRGQRGVGQRGGRA. Positions 110-152 are disordered; that stretch reads GGGTVFRGRGQRGVGQRGGRAGFQRVGAGRGQGGDRYYDNRSA. The interval 300–314 is RNA gate; sequence SIDLVTVNENAADAP. Residues 560 to 585 form a disordered region; it reads VPPNTFEEDDEAAEEQEEKAEDESEE. Positions 565–585 are enriched in acidic residues; the sequence is FEEDDEAAEEQEEKAEDESEE.

This sequence belongs to the eIF-3 subunit D family. In terms of assembly, component of the eukaryotic translation initiation factor 3 (eIF-3) complex.

It is found in the cytoplasm. Functionally, mRNA cap-binding component of the eukaryotic translation initiation factor 3 (eIF-3) complex, which is involved in protein synthesis of a specialized repertoire of mRNAs and, together with other initiation factors, stimulates binding of mRNA and methionyl-tRNAi to the 40S ribosome. The eIF-3 complex specifically targets and initiates translation of a subset of mRNAs involved in cell proliferation. In the eIF-3 complex, eif3d specifically recognizes and binds the 7-methylguanosine cap of a subset of mRNAs. This chain is Eukaryotic translation initiation factor 3 subunit D, found in Aspergillus fumigatus (strain CBS 144.89 / FGSC A1163 / CEA10) (Neosartorya fumigata).